The following is a 331-amino-acid chain: 6-phosphogluconolactonase (331 aa).

It belongs to the cycloisomerase 2 family.

It carries out the reaction 6-phospho-D-glucono-1,5-lactone + H2O = 6-phospho-D-gluconate + H(+). It participates in carbohydrate degradation; pentose phosphate pathway; D-ribulose 5-phosphate from D-glucose 6-phosphate (oxidative stage): step 2/3. Its function is as follows. Catalyzes the hydrolysis of 6-phosphogluconolactone to 6-phosphogluconate. This is 6-phosphogluconolactonase from Salmonella typhi.